The following is an 85-amino-acid chain: Large ribosomal subunit protein bL27 (85 aa).

The span at 1 to 10 shows a compositional bias: gly residues; it reads MAQKKGGGST. Residues 1–21 are disordered; the sequence is MAQKKGGGSTRNGRDSQPKML.

It belongs to the bacterial ribosomal protein bL27 family.

This chain is Large ribosomal subunit protein bL27, found in Polaromonas naphthalenivorans (strain CJ2).